A 61-amino-acid polypeptide reads, in one-letter code: uncharacterized protein (61 aa).

The tract at residues 23–61 (VPTKWQDYKKPGPNQKYTSDGKKRRRIRRSQKSILGVRS) is disordered. Basic residues predominate over residues 44–53 (KKRRRIRRSQ).

This is an uncharacterized protein from Archaeoglobus fulgidus (strain ATCC 49558 / DSM 4304 / JCM 9628 / NBRC 100126 / VC-16).